The primary structure comprises 289 residues: Shikimate dehydrogenase (NADP(+)) (289 aa).

Shikimate contacts are provided by residues 19–21 and threonine 66; that span reads SMS. The Proton acceptor role is filled by lysine 70. Residues asparagine 91 and aspartate 106 each contribute to the shikimate site. NADP(+) is bound by residues 131 to 135, 155 to 160, and leucine 229; these read GAGGA and NRTLKK. Position 231 (tyrosine 231) interacts with shikimate. Glycine 252 provides a ligand contact to NADP(+).

Belongs to the shikimate dehydrogenase family. In terms of assembly, homodimer.

It catalyses the reaction shikimate + NADP(+) = 3-dehydroshikimate + NADPH + H(+). The protein operates within metabolic intermediate biosynthesis; chorismate biosynthesis; chorismate from D-erythrose 4-phosphate and phosphoenolpyruvate: step 4/7. Functionally, involved in the biosynthesis of the chorismate, which leads to the biosynthesis of aromatic amino acids. Catalyzes the reversible NADPH linked reduction of 3-dehydroshikimate (DHSA) to yield shikimate (SA). The protein is Shikimate dehydrogenase (NADP(+)) of Halothermothrix orenii (strain H 168 / OCM 544 / DSM 9562).